A 288-amino-acid polypeptide reads, in one-letter code: Beta-lactamase CARB-3 (288 aa).

Residues 1 to 17 (MKFLLAFSLLIPSVVFA) form the signal peptide. Serine 65 (acyl-ester intermediate) is an active-site residue. Cysteine 72 and cysteine 118 are joined by a disulfide. 229-231 (RSG) is a binding site for substrate.

Belongs to the class-A beta-lactamase family.

The enzyme catalyses a beta-lactam + H2O = a substituted beta-amino acid. Functionally, hydrolyzes both carbenicillin and oxacillin. In Pseudomonas aeruginosa, this protein is Beta-lactamase CARB-3 (carB3).